The sequence spans 436 residues: Serine protease inhibitor A6 (436 aa).

The N-terminal stretch at 1–16 is a signal peptide; sequence MHLLVYLSLFFALALA. The disordered stretch occupies residues 26–60; sequence KHRHRHEQQGHHDSAKHGHQKDKQQQEQIKNDEGK. Positions 32-60 are enriched in basic and acidic residues; sequence EQQGHHDSAKHGHQKDKQQQEQIKNDEGK. Asn260 and Asn289 each carry an N-linked (GlcNAc...) asparagine glycan.

It belongs to the serpin family. As to expression, liver.

The protein localises to the secreted. The protein resides in the extracellular space. Not yet known. In Xenopus laevis (African clawed frog), this protein is Serine protease inhibitor A6 (serpina6).